We begin with the raw amino-acid sequence, 513 residues long: GMP synthase [glutamine-hydrolyzing] (513 aa).

Residues 8-198 (KIIVLDYGSQ…ALNTCGAKGN (191 aa)) form the Glutamine amidotransferase type-1 domain. The Nucleophile role is filled by Cys85. Residues His172 and Glu174 contribute to the active site. A GMPS ATP-PPase domain is found at 199–388 (WSMENFIDMQ…LGMPDEIVWR (190 aa)). 226-232 (SGGVDSS) lines the ATP pocket.

As to quaternary structure, homodimer.

The enzyme catalyses XMP + L-glutamine + ATP + H2O = GMP + L-glutamate + AMP + diphosphate + 2 H(+). The protein operates within purine metabolism; GMP biosynthesis; GMP from XMP (L-Gln route): step 1/1. Functionally, catalyzes the synthesis of GMP from XMP. This Lactococcus lactis subsp. cremoris (strain SK11) protein is GMP synthase [glutamine-hydrolyzing].